The primary structure comprises 681 residues: Sodium/glucose cotransporter 4 (681 aa).

The Extracellular portion of the chain corresponds to 1 to 36 (MSKELAAMGPGASGDGVRTETAPHIALDSRVGLHAY). The chain crosses the membrane as a helical span at residues 37–57 (DISVVVIYFVFVIAVGIWSSI). The Cytoplasmic segment spans residues 58–75 (RASRGTIGGYFLAGRSMS). The helical transmembrane segment at 76–98 (WWPIGASLMSSNVGSGLFIGLAG) threads the bilayer. The Extracellular segment spans residues 99–114 (TGAAGGLAVGGFEWNA). Residues 115 to 135 (TWLLLALGWVFVPVYIAAGVV) traverse the membrane as a helical segment. The Cytoplasmic portion of the chain corresponds to 136–157 (TMPQYLKKRFGGQRIQVYMSVL). Residues 158–178 (SLILYIFTKISTDIFSGALFI) traverse the membrane as a helical segment. Over 179–190 (QMALGWNLYLST) the chain is Extracellular. The chain crosses the membrane as a helical span at residues 191–211 (GILLVVTAVYTIAGGLMAVIY). Over 212–217 (TDALQT) the chain is Cytoplasmic. A helical transmembrane segment spans residues 218–238 (VIMVGGALVLMFLGFQDVGWY). The Extracellular portion of the chain corresponds to 239–275 (PGLEQRYRQAIPNVTVPNTTCHLPRPDAFHILRDPVS). The N-linked (GlcNAc...) asparagine glycan is linked to asparagine 251. The helical transmembrane segment at 276–296 (GDIPWPGLIFGLTVLATWCWC) threads the bilayer. At 297-317 (TDQVIVQRSLSAKSLSHAKGG) the chain is on the cytoplasmic side. A helical membrane pass occupies residues 318 to 338 (SVLGGYLKILPMFFIVMPGMI). At 339–383 (SRALFPDEVGCVDPDVCQRICGARVGCSNIAYPKLVMALMPVGLR) the chain is on the extracellular side. A helical transmembrane segment spans residues 384-406 (GLMIAVIMAALMSSLTSIFNSSS). Residues 407–427 (TLFTIDVWQRFRRKSTEQELM) lie on the Cytoplasmic side of the membrane. A helical membrane pass occupies residues 428–448 (VVGRVFVVFLVVISILWIPII). At 449–459 (QSSNSGQLFDY) the chain is on the extracellular side. A helical transmembrane segment spans residues 460–480 (IQAVTSYLAPPITALFLLAIF). The Cytoplasmic portion of the chain corresponds to 481–487 (CKRVTEP). Residues 488–508 (GAFWGLVFGLGVGLLRMILEF) form a helical membrane-spanning segment. The Extracellular portion of the chain corresponds to 509 to 530 (SYPAPACGEVDRRPAVLKDFHY). A helical membrane pass occupies residues 531 to 551 (LYFAILLCGLTAIVIVIVSLC). The Cytoplasmic portion of the chain corresponds to 552-660 (TTPIPEEQLT…SIEEEPLWRH (109 aa)). A compositionally biased stretch (basic and acidic residues) spans 579–591 (AHESTPEISERPA). Residues 579 to 614 (AHESTPEISERPAGECPAGGGAAENSSLGQEQPEAP) form a disordered region. Phosphoserine occurs at positions 604 and 605. A helical membrane pass occupies residues 661 to 681 (VCNINAVLLLAINIFLWGYFA).

It belongs to the sodium:solute symporter (SSF) (TC 2.A.21) family. As to expression, expressed in the small intestine, kidney and liver.

It is found in the cell membrane. It carries out the reaction D-mannose(out) + n Na(+)(out) = D-mannose(in) + n Na(+)(in). Its function is as follows. Electrogenic Na(+)-coupled sugar symporter that may play a primary role in D-mannose and possibly D-fructose and D-glucose transport at the plasma membrane. Transporter activity is driven by a transmembrane Na(+) electrochemical gradient set by the Na(+)/K(+) pump. Exclusively recognizes sugar substrates having a pyranose ring with an axial hydroxyl group on carbon 2. The protein is Sodium/glucose cotransporter 4 of Homo sapiens (Human).